A 327-amino-acid chain; its full sequence is MQQLTEIVEQALVIIDQASDLKALDDIRVDYLGKKGKITDMMKMMGSLSPEEKPAFGQAVNDAKQAIQQKLTERIDGLKSSELEAKLIAEKIDVTLPGRTQENGGLHPVTRTIERIETFFGELGFSVKQGPEIEDDFHNFDALNISEHHPARADHDTFYFNPKLMLRTQTSGVQIRTMETEKPPLRIISPGRVYRNDYDQTHTPMFHQVEGLLVDEHVNFAELKGILHDFLRNFFEEDLQVRFRPSYFPFTEPSAEVDVMGKNGKWLEVLGCGMVHPNVLRSVGIDPEKYSGFAFGMGVERLTMLRYGVNDLRAFFENDLRFLKQFK.

Glutamate 252 is a binding site for Mg(2+).

This sequence belongs to the class-II aminoacyl-tRNA synthetase family. Phe-tRNA synthetase alpha subunit type 1 subfamily. As to quaternary structure, tetramer of two alpha and two beta subunits. Requires Mg(2+) as cofactor.

It is found in the cytoplasm. It catalyses the reaction tRNA(Phe) + L-phenylalanine + ATP = L-phenylalanyl-tRNA(Phe) + AMP + diphosphate + H(+). The protein is Phenylalanine--tRNA ligase alpha subunit of Shewanella putrefaciens (strain CN-32 / ATCC BAA-453).